Here is a 1788-residue protein sequence, read N- to C-terminus: MMMASKDVVATNVASNNNANNTSATSRFLSRFKGLGGGASPPSPIKIKSTEMALGLIGRTTPEPTGTAGPPPKQQRDRPPRTQEEVQYGMGWSDRPIDQNVKSWEELDTTVKEEILDNHKEWFDAGGLGPCTMPPTYERVKDDSPPGEQVKWSARDGVNIGVERLTTVSGPEWNLCPLPPIDLRNMEPASEPTIGDMIEFYEGHIYHYSIYIGQGKTVGVHSPQAAFSVARVTIQPIAAWWRVCYIPQPKHRLSYDQLKELENEPWPYAAITNNCFEFCCQVMNLEDTWLQRRLVTSGRFHHPTQSWSQQTPEFQQDSKLELVRDAILAAVNGLVSQPFKNFLGKLKPLNVLNILSNCDWTFMGVVEMVILLLELFGVFWNPPDVSNFIASLLPDFHLQGPEDLARDLVPVILGGIGLAIGFTRDKVTKVMKSAVDGLRAATQLGQYGLEIFSLLKKYFFGGDQTERTLKGIEAAVIDMEVLSSTSVTQLVRDKQAAKAYMNILDNEEEKARKLSAKNADPHVISSTNALISRISMARSALAKAQAEMTSRMRPVVIMMCGPPGIGKTKAAEHLAKRLANEIRPGGKVGLVPREAVDHWDGYHGEEVMLWDDYGMTKILDDCNKLQAIADSAPLTLNCDRIENKGMQFVSDAIVITTNAPGPAPVDFVNLGPVCRRVDFLVYCSAPEVEQIRRVSPGDTSALKDCFKLDFSHLKMELAPQGGFDNQGNTPFGKGTMKPTTINRLLIQAVALTMERQDEFQLQGKMYDFDDDRVSAFTTMARDNGLGILSMAGLGKKLRGVTTMEGLKNALKGYKISACTIKWQAKVYSLESDGNSVNIKEERNILTQQQQSVCTASVALTRLRAARAVAYASCIQSAITSILQIAGSALVVNRAVKRMFGTRTATLSLEGPPREHKCRVHMAKAAGKGPIGHDDVVEKYGLCETEEDEEVAHTEIPSATMEGKNKGKNKKGRGRRNNYNAFSRRGLNDEEYEEYKKIREEKGGNYSIQEYLEDRQRYEEELAEVQAGGDGGIGETEMEIRHRVFYKSKSRKHHQEERRQLGLVTGSDIRKRKPIDWTPPKSAWADDEREVDYNEKISFEAPPTLWSRVTKFGSGWGFWVSPTVFITTTHVIPTSAKEFFGEPLTSIAIHRAGEFTLFRFSKKIRPDLTGMILEEGCPEGTVCSVLIKRDSGELLPLAVRMGAIASMRIQGRLVHGQSGMLLTGANAKGMDLGTIPGDCGAPYVYKRANDWVVCGVHAAATKSGNTVVCAVQASEGETTLEGGDKGHYAGHEIIKHGCGPALSTKTKFWKSSPEPLPPGVYEPAYLGGRDPRVTVGPSLQQVLRDQLKPFAEPRGRMPEPGLLEAAVETVTSSLEQVMDTPVPWSYSDACQSLDKTTSSGFPYHRRKNDDWNGTTFVRELGEQAAHANNMYEQAKSMKPMYTGALKDELVKPEKVYQKVKKRLLWGADLGTVVRAARAFGPFCDAIKSHTIKLPIKVGMNSIEDGPLIYAEHSKYKYHFDADYTAWDSTQNRQIMTESFSIMCRLTASPELASVVAQDLLAPSEMDVGDYVIRVKEGLPSGFPCTSQVNSINHWLITLCALSEVTGLSPDVIQSMSYFSFYGDDEIVSTDIEFDPAKLTQVLREYGLRPTRPDKSEGPIIVRKSVDGLVFLRRTISRDAAGFQGRLDRASIERQIYWTRGPNHSDPFETLVPHQQRKVQLISLLGEASLHGEKFYRKISSKVIQEIKTGGLEMYVPGWQAMFRWMRFHDLGLWTGDRNLLPEFVNDDGV.

The interaction with host MAP1LC3A/LC3 stretch occupies residues 1–184 (MMMASKDVVA…LCPLPPIDLR (184 aa)). The segment covering 58–68 (GRTTPEPTGTA) has biased composition (low complexity). The interval 58–86 (GRTTPEPTGTAGPPPKQQRDRPPRTQEEV) is disordered. Positions 74-84 (QQRDRPPRTQE) are enriched in basic and acidic residues. Residues 185 to 399 (NMEPASEPTI…ASLLPDFHLQ (215 aa)) are interaction with NTPase. Residues 302-399 (HPTQSWSQQT…ASLLPDFHLQ (98 aa)) form an interaction with NS4 region. Host ER membrane association regions lie at residues 319-350 (KLEL…KPLN) and 361-399 (TFMG…FHLQ). The interaction with NS1-2 and NS4 and homooligomerization stretch occupies residues 400–575 (GPEDLARDLV…GKTKAAEHLA (176 aa)). An SF3 helicase domain is found at 533–698 (RISMARSALA…EQIRRVSPGD (166 aa)). Position 561–568 (561–568 (GPPGIGKT)) interacts with ATP. The interval 652 to 757 (AIVITTNAPG…AVALTMERQD (106 aa)) is important for mitochondrion targeting. Residues 827–833 (YSLESDG) are functions as endoplasmic reticulum export signal. Residues 866 to 911 (RAVAYASCIQSAITSILQIAGSALVVNRAVKRMFGTRTATLSLEGP) form a host membrane association region. The segment at 948 to 979 (EEVAHTEIPSATMEGKNKGKNKKGRGRRNNYN) is disordered. Over residues 965 to 975 (KGKNKKGRGRR) the composition is skewed to basic residues. The interval 988 to 993 (DEEYEE) is acidic. Tyr991 is modified (O-(5'-phospho-RNA)-tyrosine). Positions 1083–1099 (WADDEREVDYNEKISFE) are interaction with host EIF4G. In terms of domain architecture, Peptidase C37 spans 1100–1280 (APPTLWSRVT…QASEGETTLE (181 aa)). Residues His1129, Glu1153, and Cys1238 each act as for 3CLpro activity in the active site. A RdRp catalytic domain is found at 1515–1636 (KYHFDADYTA…STDIEFDPAK (122 aa)). Mg(2+)-binding residues include Asp1519, Asp1521, Asp1623, and Glu1624.

In terms of assembly, homodimer. Homooligomer. Interacts with NTPase; this interaction increases the proapoptotic activity of the NTPase and is crucial for the formation of the viral replication complex. Interacts with NS4; this interaction is crucial for the formation of the viral replication complex. Interacts (via N-terminus) with host VAPA. Interacts with host MAP1LC3A/LC3; this interaction does not seem to be linked to host autophagy, but rather plays a role in the formation of viral factories. Homooligomer. Interacts with NS1-2; this interaction increases the proapoptotic activity of the NTPase and is crucial for the formation of the viral replication complex. Interacts with NS4; this interaction increases the proapoptotic activity of the NTPase. As to quaternary structure, homodimer. Monomer; in solution. In terms of assembly, interacts with NTPase; this interaction increases the proapoptotic activity of the NTPase. Interacts with NS1-2; this interaction is crucial for the formation of the viral replication complex. Monomer. Interacts with the RNA-directed RNA polymerase; this interaction induces the multimerization of the RdRp and enhances its activity. Interacts with host IEF4G1; this interaction plays a role in translation of viral proteins. As to quaternary structure, homohexamer; also forms fibrous hexameric oligomer. Interacts with the viral genome-linked protein; this interaction induces the multimerization of the RdRp and enhances its activity. Mg(2+) serves as cofactor. Mn(2+) is required as a cofactor. In terms of processing, specific enzymatic cleavages in vivo yield mature proteins. 3CLpro is first autocatalytically cleaved, then processes the whole polyprotein. NS1/2-3 and NS3-4 sites are cleaved rapidly and NS4-5, NS5-6, and NS6-7 sites are processed subsequently and less efficiently. VPg is uridylylated by the polymerase and is covalently attached to the 5'-end of the polyadenylated genomic and subgenomic RNAs. This uridylylated form acts as a nucleotide-peptide primer for the polymerase.

It localises to the host Golgi apparatus membrane. The protein resides in the host endoplasmic reticulum membrane. The enzyme catalyses a ribonucleoside 5'-triphosphate + H2O = a ribonucleoside 5'-diphosphate + phosphate + H(+). It catalyses the reaction Endopeptidase with a preference for cleavage when the P1 position is occupied by Glu-|-Xaa and the P1' position is occupied by Gly-|-Yaa.. The catalysed reaction is RNA(n) + a ribonucleoside 5'-triphosphate = RNA(n+1) + diphosphate. Its function is as follows. Induces the proliferation of the host smooth ER membranes forming long tubular structures. These remodeled membranes probably form the viral factories that contain the replication complex. May play a role in viral replication by interacting with host VAPA, a vesicle-associated membrane protein that plays a role in SNARE-mediated vesicle fusion. This interaction may target replication complex to intracellular membranes. Functionally, displays NTPase activity, but no helicase activity. Induces the formation of convoluted membranes derived from the host ER. These remodeled membranes probably form the viral factories that contain the replication complex. Initiates host cell death by targeting the mitochondrial outer membrane, leading to the permeabilization of mitochondria, programmed host cell death and viral egress. Probably plays a role in preventing the assembly of host stress granules. Probable key protein responsible for the formation of membrane alterations by the virus. Induces the formation of convoluted membranes derived from the host ER. These remodeled membranes probably form the viral factories that contain the replication complex. May play a role in targeting replication complex to intracellular membranes. In terms of biological role, viral genome-linked protein is covalently linked to the 5'-end of the positive-strand, negative-strand genomic RNAs and subgenomic RNA. Acts as a genome-linked replication primer. May recruit ribosome to viral RNA thereby promoting viral proteins translation. Interacts with host translation initiation complex to allow the translation of viral proteins. Induces the formation of aggregates of RNA-directed RNA polymerase in the presence of RNA. Through its interaction with the viral RNA-directed RNA polymerase, plays a crucial role in enhancing the polymerase activity. Its function is as follows. Processes the polyprotein. 3CLpro-RdRp is first released by autocleavage, then all other proteins are cleaved. May cleave polyadenylate-binding protein thereby inhibiting cellular translation. Functionally, replicates genomic and antigenomic RNA by recognizing replications specific signals. Also transcribes a subgenomic mRNA by initiating RNA synthesis internally on antigenomic RNA. This sgRNA codes for structural proteins. Catalyzes the covalent attachment VPg with viral RNAs. The protein is Genome polyprotein of Southampton virus (strain GI/Human/United Kingdom/Southampton/1991) (SHV).